The primary structure comprises 137 residues: Putative pre-16S rRNA nuclease (137 aa).

This sequence belongs to the YqgF nuclease family.

The protein localises to the cytoplasm. Could be a nuclease involved in processing of the 5'-end of pre-16S rRNA. The chain is Putative pre-16S rRNA nuclease from Bacillus cytotoxicus (strain DSM 22905 / CIP 110041 / 391-98 / NVH 391-98).